The following is a 1242-amino-acid chain: DNA polymerase catalytic subunit (1242 aa).

4 disordered regions span residues 14–38 (GAVAGGRRQRSQPGSAQGSGKRPPQ), 644–665 (LQSAPSSQDGVSPGSGSNSSSS), 877–898 (EGDSEESSALPEGLETSSGGSN), and 1108–1163 (TAPQ…KPPS). The span at 653–665 (GVSPGSGSNSSSS) shows a compositional bias: low complexity. A compositionally biased stretch (polar residues) spans 1110-1119 (PQGSSDNGDS). Over residues 1145–1155 (ESNRRGGEPAK) the composition is skewed to basic and acidic residues.

The protein belongs to the DNA polymerase type-B family. In terms of assembly, forms a complex with the ssDNA-binding protein UL57, the DNA polymerase processivity factor UL44, and the alkaline exonuclease UL98. Interacts with the putative helicase-primase complex composed of UL70, UL102 and UL105 proteins; these interactions may coordinate leading and lagging strand DNA synthesis at the replication fork.

It localises to the host nucleus. It catalyses the reaction DNA(n) + a 2'-deoxyribonucleoside 5'-triphosphate = DNA(n+1) + diphosphate. In terms of biological role, replicates viral genomic DNA in the late phase of lytic infection, producing long concatemeric DNA. The replication complex is composed of six viral proteins: the DNA polymerase, processivity factor, primase, primase-associated factor, helicase, and ssDNA-binding protein. This is DNA polymerase catalytic subunit (UL54) from Homo sapiens (Human).